We begin with the raw amino-acid sequence, 394 residues long: 1-deoxy-D-xylulose 5-phosphate reductoisomerase (394 aa).

NADPH contacts are provided by T14, G15, S16, I17, G40, and N128. 1-deoxy-D-xylulose 5-phosphate is bound at residue K129. An NADPH-binding site is contributed by E130. D154 provides a ligand contact to Mn(2+). The 1-deoxy-D-xylulose 5-phosphate site is built by S155, E156, S180, and H203. Position 156 (E156) interacts with Mn(2+). G209 contacts NADPH. The 1-deoxy-D-xylulose 5-phosphate site is built by S216, N221, K222, and E225. E225 lines the Mn(2+) pocket.

Belongs to the DXR family. It depends on Mg(2+) as a cofactor. The cofactor is Mn(2+).

It catalyses the reaction 2-C-methyl-D-erythritol 4-phosphate + NADP(+) = 1-deoxy-D-xylulose 5-phosphate + NADPH + H(+). The protein operates within isoprenoid biosynthesis; isopentenyl diphosphate biosynthesis via DXP pathway; isopentenyl diphosphate from 1-deoxy-D-xylulose 5-phosphate: step 1/6. In terms of biological role, catalyzes the NADPH-dependent rearrangement and reduction of 1-deoxy-D-xylulose-5-phosphate (DXP) to 2-C-methyl-D-erythritol 4-phosphate (MEP). This is 1-deoxy-D-xylulose 5-phosphate reductoisomerase from Xylella fastidiosa (strain M12).